Consider the following 304-residue polypeptide: Methionyl-tRNA formyltransferase (304 aa).

110 to 113 (SLLP) contacts (6S)-5,6,7,8-tetrahydrofolate.

The protein belongs to the Fmt family.

The catalysed reaction is L-methionyl-tRNA(fMet) + (6R)-10-formyltetrahydrofolate = N-formyl-L-methionyl-tRNA(fMet) + (6S)-5,6,7,8-tetrahydrofolate + H(+). Attaches a formyl group to the free amino group of methionyl-tRNA(fMet). The formyl group appears to play a dual role in the initiator identity of N-formylmethionyl-tRNA by promoting its recognition by IF2 and preventing the misappropriation of this tRNA by the elongation apparatus. The chain is Methionyl-tRNA formyltransferase from Gluconobacter oxydans (strain 621H) (Gluconobacter suboxydans).